We begin with the raw amino-acid sequence, 238 residues long: Cysteine-rich venom protein (238 aa).

The first 19 residues, 1–19 (MIAFIVLLSLAAVLQQSSG), serve as a signal peptide directing secretion. The 127-residue stretch at 38-164 (VDKHNALRRS…STKYLYVCQY (127 aa)) folds into the SCP domain. 8 disulfides stabilise this stretch: Cys75/Cys153, Cys92/Cys165, Cys148/Cys162, Cys184/Cys191, Cys187/Cys196, Cys200/Cys233, Cys209/Cys227, and Cys218/Cys231. The ShKT domain occupies 200 to 233 (CKYEDAFTNCNELAKETKCKTEWIKSKCPATCFC).

It belongs to the CRISP family. Expressed by the venom gland.

Its subcellular location is the secreted. In terms of biological role, blocks olfactory (CNGA2) and retinal (CNGA1) CNG channel currents. Does not affect neither depolarization- nor caffeine-induced contraction of smooth muscle. In Drysdalia coronoides (White-lipped snake), this protein is Cysteine-rich venom protein.